A 278-amino-acid polypeptide reads, in one-letter code: Digeranylgeranylglyceryl phosphate synthase (278 aa).

Helical transmembrane passes span 12 to 32 (LKNCLTASFGAFIGGLIASYF), 34 to 54 (LAMVDNLILASIVVFLVCGFG), 92 to 112 (LVVMGLFISLFNISCFLMAVL), 129 to 149 (IIGNLIVAYLTGSVFIFGGIA), 153 to 173 (IDVTIMLFLCALFAMWSREII), 204 to 224 (FLLIFAIFLSPLPYLFGFFGI), 226 to 246 (YMISVVFCDLLFLFGIYKLVF), and 257 to 277 (SRNIKIVTNLVLIAFLIGSLF).

The protein belongs to the UbiA prenyltransferase family. DGGGP synthase subfamily. Mg(2+) is required as a cofactor.

It localises to the cell membrane. The catalysed reaction is sn-3-O-(geranylgeranyl)glycerol 1-phosphate + (2E,6E,10E)-geranylgeranyl diphosphate = 2,3-bis-O-(geranylgeranyl)-sn-glycerol 1-phosphate + diphosphate. It participates in membrane lipid metabolism; glycerophospholipid metabolism. Its function is as follows. Prenyltransferase that catalyzes the transfer of the geranylgeranyl moiety of geranylgeranyl diphosphate (GGPP) to the C2 hydroxyl of (S)-3-O-geranylgeranylglyceryl phosphate (GGGP). This reaction is the second ether-bond-formation step in the biosynthesis of archaeal membrane lipids. This chain is Digeranylgeranylglyceryl phosphate synthase, found in Methanococcus maripaludis (strain DSM 14266 / JCM 13030 / NBRC 101832 / S2 / LL).